Here is a 429-residue protein sequence, read N- to C-terminus: Probable imidazolonepropionase (429 aa).

4-imidazolone-5-propanoate contacts are provided by Tyr161 and His194. Tyr161 is a binding site for N-formimidoyl-L-glutamate. His262 provides a ligand contact to Fe(3+). His262 is a binding site for Zn(2+). Glu265 is a 4-imidazolone-5-propanoate binding site. Asp336 contacts Fe(3+). Asp336 is a Zn(2+) binding site. Asn338 is an N-formimidoyl-L-glutamate binding site.

This sequence belongs to the metallo-dependent hydrolases superfamily. HutI family. Zn(2+) is required as a cofactor. Fe(3+) serves as cofactor.

The catalysed reaction is 4-imidazolone-5-propanoate + H2O = N-formimidoyl-L-glutamate. Its pathway is amino-acid degradation; L-histidine degradation into L-glutamate; N-formimidoyl-L-glutamate from L-histidine: step 3/3. This Nematostella vectensis (Starlet sea anemone) protein is Probable imidazolonepropionase (amdhd1).